We begin with the raw amino-acid sequence, 336 residues long: Fructose-1,6-bisphosphatase class 1 (336 aa).

The Mg(2+) site is built by Glu90, Asp112, Leu114, and Asp115. Residues 115-118, Asn211, and Lys277 contribute to the substrate site; that span reads DGSS. Glu283 lines the Mg(2+) pocket.

It belongs to the FBPase class 1 family. In terms of assembly, homotetramer. Mg(2+) serves as cofactor.

The protein resides in the cytoplasm. The catalysed reaction is beta-D-fructose 1,6-bisphosphate + H2O = beta-D-fructose 6-phosphate + phosphate. The protein operates within carbohydrate biosynthesis; gluconeogenesis. In Pseudomonas entomophila (strain L48), this protein is Fructose-1,6-bisphosphatase class 1.